Consider the following 204-residue polypeptide: LexA repressor (204 aa).

A DNA-binding region (H-T-H motif) is located at residues 27–47 (VREIGEAVGLASSSTVHGHLA). Residues Ser126 and Lys164 each act as for autocatalytic cleavage activity in the active site.

The protein belongs to the peptidase S24 family. As to quaternary structure, homodimer.

It carries out the reaction Hydrolysis of Ala-|-Gly bond in repressor LexA.. Represses a number of genes involved in the response to DNA damage (SOS response), including recA and lexA. In the presence of single-stranded DNA, RecA interacts with LexA causing an autocatalytic cleavage which disrupts the DNA-binding part of LexA, leading to derepression of the SOS regulon and eventually DNA repair. The protein is LexA repressor of Listeria welshimeri serovar 6b (strain ATCC 35897 / DSM 20650 / CCUG 15529 / CIP 8149 / NCTC 11857 / SLCC 5334 / V8).